A 275-amino-acid chain; its full sequence is Bis(5'-nucleosyl)-tetraphosphatase, symmetrical (275 aa).

It belongs to the Ap4A hydrolase family.

It catalyses the reaction P(1),P(4)-bis(5'-adenosyl) tetraphosphate + H2O = 2 ADP + 2 H(+). Hydrolyzes diadenosine 5',5'''-P1,P4-tetraphosphate to yield ADP. The protein is Bis(5'-nucleosyl)-tetraphosphatase, symmetrical of Haemophilus influenzae (strain PittGG).